Here is a 125-residue protein sequence, read N- to C-terminus: Large ribosomal subunit protein bL12 (125 aa).

The protein belongs to the bacterial ribosomal protein bL12 family. As to quaternary structure, homodimer. Part of the ribosomal stalk of the 50S ribosomal subunit. Forms a multimeric L10(L12)X complex, where L10 forms an elongated spine to which 2 to 4 L12 dimers bind in a sequential fashion. Binds GTP-bound translation factors.

Forms part of the ribosomal stalk which helps the ribosome interact with GTP-bound translation factors. Is thus essential for accurate translation. This is Large ribosomal subunit protein bL12 from Francisella tularensis subsp. holarctica (strain FTNF002-00 / FTA).